The primary structure comprises 156 residues: 6,7-dimethyl-8-ribityllumazine synthase (156 aa).

5-amino-6-(D-ribitylamino)uracil-binding positions include F23, 57 to 59, and 81 to 83; these read AYE and AII. Position 86–87 (86–87) interacts with (2S)-2-hydroxy-3-oxobutyl phosphate; that stretch reads GT. The active-site Proton donor is H89. F114 provides a ligand contact to 5-amino-6-(D-ribitylamino)uracil. R128 is a (2S)-2-hydroxy-3-oxobutyl phosphate binding site.

It belongs to the DMRL synthase family.

The enzyme catalyses (2S)-2-hydroxy-3-oxobutyl phosphate + 5-amino-6-(D-ribitylamino)uracil = 6,7-dimethyl-8-(1-D-ribityl)lumazine + phosphate + 2 H2O + H(+). It participates in cofactor biosynthesis; riboflavin biosynthesis; riboflavin from 2-hydroxy-3-oxobutyl phosphate and 5-amino-6-(D-ribitylamino)uracil: step 1/2. Catalyzes the formation of 6,7-dimethyl-8-ribityllumazine by condensation of 5-amino-6-(D-ribitylamino)uracil with 3,4-dihydroxy-2-butanone 4-phosphate. This is the penultimate step in the biosynthesis of riboflavin. The sequence is that of 6,7-dimethyl-8-ribityllumazine synthase from Helicobacter pylori (strain Shi470).